A 252-amino-acid chain; its full sequence is Clc-like protein 2 (252 aa).

A run of 4 helical transmembrane segments spans residues 7-29 (YAIL…TPAW), 91-111 (LFHI…SFCV), 127-147 (VFLV…AVYS), and 173-193 (IALT…VHVL).

This sequence belongs to the Clc family.

It is found in the membrane. The sequence is that of Clc-like protein 2 (clc-2) from Caenorhabditis elegans.